The chain runs to 146 residues: MATPATVSIEPTLAAIRARWCINSSKTTQSFNDPASMEEVVEYLKGTYSALRKSVACAKLKILHLKQRMQNATNFLARLMSCKNQASRSHHSTAKSAKSALSSDSGDGSDPDPEPETFPSAFITTPTNSIMLKAFFANISITEVAK.

The interval 87–121 (SRSHHSTAKSAKSALSSDSGDGSDPDPEPETFPSA) is disordered. The segment covering 94–106 (AKSAKSALSSDSG) has biased composition (low complexity).

This is an uncharacterized protein from Escherichia coli (strain K12).